Consider the following 314-residue polypeptide: GDP-L-fucose synthase (314 aa).

NADP(+) is bound by residues Gly-15–Gly-21 and Leu-109–Ser-112. Tyr-140 serves as the catalytic Proton donor/acceptor. Residues Lys-144, Pro-167–Leu-170, and His-183 contribute to the NADP(+) site. Substrate-binding residues include Lys-191, Trp-206, Arg-213, and Asp-273.

The protein belongs to the NAD(P)-dependent epimerase/dehydratase family. Fucose synthase subfamily.

The enzyme catalyses GDP-beta-L-fucose + NADP(+) = GDP-4-dehydro-alpha-D-rhamnose + NADPH + H(+). The protein operates within nucleotide-sugar biosynthesis; GDP-L-fucose biosynthesis via de novo pathway; GDP-L-fucose from GDP-alpha-D-mannose: step 2/2. Functionally, catalyzes the two-step NADP-dependent conversion of GDP-4-dehydro-6-deoxy-D-mannose to GDP-fucose, involving an epimerase and a reductase reaction. In Sinorhizobium fredii (strain NBRC 101917 / NGR234), this protein is GDP-L-fucose synthase.